We begin with the raw amino-acid sequence, 367 residues long: Riboflavin biosynthesis protein VVA0006 (367 aa).

Residue 215 to 219 (RLHSE) coordinates GTP. Residues C220, C231, and C233 each contribute to the Zn(2+) site. GTP-binding positions include Q236, 258–260 (EGR), and T280. Residue D292 is the Proton acceptor of the active site. R294 functions as the Nucleophile in the catalytic mechanism. Residues T315 and K320 each contribute to the GTP site.

This sequence in the N-terminal section; belongs to the YbiA family. It in the C-terminal section; belongs to the GTP cyclohydrolase II family. It depends on Zn(2+) as a cofactor.

The catalysed reaction is 2,5-diamino-6-hydroxy-4-(5-phosphoribosylamino)-pyrimidine + H2O = 2,5,6-triamino-4-hydroxypyrimidine + D-ribose 5-phosphate. It carries out the reaction 5-amino-6-(5-phospho-D-ribosylamino)uracil + H2O = 5,6-diaminouracil + D-ribose 5-phosphate. It catalyses the reaction GTP + 4 H2O = 2,5-diamino-6-hydroxy-4-(5-phosphoribosylamino)-pyrimidine + formate + 2 phosphate + 3 H(+). The protein operates within cofactor biosynthesis; riboflavin biosynthesis; 5-amino-6-(D-ribitylamino)uracil from GTP: step 1/4. Functionally, catalyzes the hydrolysis of the N-glycosidic bond in the first two intermediates of riboflavin biosynthesis, which are highly reactive metabolites, yielding relatively innocuous products. Thus, can divert a surplus of harmful intermediates into relatively harmless products and pre-empt the damage these intermediates would otherwise do. Has no activity against GTP, nucleoside monophosphates or ADP-ribose. Catalyzes the conversion of GTP to 2,5-diamino-6-ribosylamino-4(3H)-pyrimidinone 5'-phosphate (DARP), formate and pyrophosphate. In Vibrio vulnificus (strain YJ016), this protein is Riboflavin biosynthesis protein VVA0006.